The sequence spans 141 residues: Nucleoside triphosphatase NudI (141 aa).

The Nudix hydrolase domain maps to 1-141 (MRQRTIVCPL…RKTLRLKGLL (141 aa)). The short motif at 38–59 (GGVEPGERIEEALRREIREELG) is the Nudix box element.

The protein belongs to the Nudix hydrolase family. NudI subfamily. In terms of assembly, monomer. Requires Mg(2+) as cofactor.

It carries out the reaction a ribonucleoside 5'-triphosphate + H2O = a ribonucleoside 5'-phosphate + diphosphate + H(+). The enzyme catalyses a 2'-deoxyribonucleoside 5'-triphosphate + H2O = a 2'-deoxyribonucleoside 5'-phosphate + diphosphate + H(+). The catalysed reaction is dUTP + H2O = dUMP + diphosphate + H(+). It catalyses the reaction dTTP + H2O = dTMP + diphosphate + H(+). It carries out the reaction dCTP + H2O = dCMP + diphosphate + H(+). Catalyzes the hydrolysis of nucleoside triphosphates, with a preference for pyrimidine deoxynucleoside triphosphates (dUTP, dTTP and dCTP). In Escherichia coli O6:K15:H31 (strain 536 / UPEC), this protein is Nucleoside triphosphatase NudI.